We begin with the raw amino-acid sequence, 120 residues long: Natriuretic peptide (120 aa).

The first 25 residues, 1 to 25 (MVGLSRLADGGLLLVLALLPLALDG), serve as a signal peptide directing secretion. Positions 26 to 70 (KPAPLEKAPMAPARIIPYLRPVGKESRAALDRMVPPEDGDSRRLE) are excised as a propeptide. A disulfide bond links cysteine 81 and cysteine 97. The propeptide occupies 110–120 (ILPYLRPIRKE).

Belongs to the natriuretic peptide family. Expressed by the venom gland.

The protein localises to the secreted. Its function is as follows. Natriuretic peptide that dose-dependently induces the rapid relaxation of rat aortic strips phenylephrine-precontracted. Acts by stimulating cGMP production in a dose-dependent manner (by probably activating NPR1 and/or NPR2). May also show potent hypotensive effects. This chain is Natriuretic peptide, found in Micrurus altirostris (Uruguayan coral snake).